The chain runs to 92 residues: Long neurotoxin 77 (92 aa).

The N-terminal stretch at 1–21 is a signal peptide; the sequence is MKTLLLTLVVVTIVCLDLGDS. Disulfide bonds link Cys-24/Cys-41, Cys-34/Cys-62, Cys-47/Cys-51, Cys-66/Cys-77, and Cys-78/Cys-83.

The protein belongs to the three-finger toxin family. Long-chain subfamily. Type II alpha-neurotoxin sub-subfamily. Expressed by the venom gland.

The protein resides in the secreted. Its function is as follows. Binds with high affinity to muscular (alpha-1/CHRNA1) and neuronal (alpha-7/CHRNA7) nicotinic acetylcholine receptor (nAChR) and inhibits acetylcholine from binding to the receptor, thereby impairing neuromuscular and neuronal transmission. In Drysdalia coronoides (White-lipped snake), this protein is Long neurotoxin 77.